A 465-amino-acid polypeptide reads, in one-letter code: Lactaldehyde dehydrogenase (465 aa).

NAD(+) is bound at residue 220-225 (GSVEVG). Residues glutamate 240 and cysteine 274 contribute to the active site.

This sequence belongs to the aldehyde dehydrogenase family. In terms of assembly, homotetramer.

The catalysed reaction is (S)-lactaldehyde + NAD(+) + H2O = (S)-lactate + NADH + 2 H(+). It participates in cofactor biosynthesis; coenzyme F420 biosynthesis. Its function is as follows. Involved in F420 biosynthesis through the oxidation of lactaldehyde to lactate. In Methanococcus maripaludis (strain C5 / ATCC BAA-1333), this protein is Lactaldehyde dehydrogenase.